The following is a 372-amino-acid chain: Dual-specificity RNA methyltransferase RlmN (372 aa).

Catalysis depends on E94, which acts as the Proton acceptor. A Radical SAM core domain is found at 100–339; the sequence is DGDRATLCVS…VTIRKTRGDD (240 aa). C107 and C344 form a disulfide bridge. The [4Fe-4S] cluster site is built by C114, C118, and C121. Residues 168 to 169, S200, 222 to 224, and N301 each bind S-adenosyl-L-methionine; these read GE and SLH. The active-site S-methylcysteine intermediate is C344.

This sequence belongs to the radical SAM superfamily. RlmN family. It depends on [4Fe-4S] cluster as a cofactor.

It is found in the cytoplasm. It catalyses the reaction adenosine(2503) in 23S rRNA + 2 reduced [2Fe-2S]-[ferredoxin] + 2 S-adenosyl-L-methionine = 2-methyladenosine(2503) in 23S rRNA + 5'-deoxyadenosine + L-methionine + 2 oxidized [2Fe-2S]-[ferredoxin] + S-adenosyl-L-homocysteine. The catalysed reaction is adenosine(37) in tRNA + 2 reduced [2Fe-2S]-[ferredoxin] + 2 S-adenosyl-L-methionine = 2-methyladenosine(37) in tRNA + 5'-deoxyadenosine + L-methionine + 2 oxidized [2Fe-2S]-[ferredoxin] + S-adenosyl-L-homocysteine. In terms of biological role, specifically methylates position 2 of adenine 2503 in 23S rRNA and position 2 of adenine 37 in tRNAs. m2A2503 modification seems to play a crucial role in the proofreading step occurring at the peptidyl transferase center and thus would serve to optimize ribosomal fidelity. The polypeptide is Dual-specificity RNA methyltransferase RlmN (Aliivibrio fischeri (strain ATCC 700601 / ES114) (Vibrio fischeri)).